The primary structure comprises 185 residues: Cuticle protein 18.6, isoform B (185 aa).

6 tandem repeats follow at residues Ala21 to Ala24, Ala33 to Val36, Ala41 to Val44, Ala133 to Val136, Ala139 to Val142, and Ala150 to Val153. A Chitin-binding type R&amp;R domain is found at His64–Ala134.

Functionally, component of the cuticle of migratory locust which contains more than 100 different structural proteins. This Locusta migratoria (Migratory locust) protein is Cuticle protein 18.6, isoform B.